We begin with the raw amino-acid sequence, 424 residues long: Adenylosuccinate synthetase (424 aa).

Residues 12-18 (GDEGKGK) and 40-42 (GHT) contribute to the GTP site. The active-site Proton acceptor is the Asp-13. Residues Asp-13 and Gly-40 each coordinate Mg(2+). IMP contacts are provided by residues 13-16 (DEGK), 38-41 (NAGH), Thr-130, Arg-144, Asn-220, Thr-235, and Arg-299. The Proton donor role is filled by His-41. 295-301 (VTTGRRR) provides a ligand contact to substrate. GTP-binding positions include Arg-301, 327-329 (KLD), and 412-414 (GTG).

This sequence belongs to the adenylosuccinate synthetase family. Homodimer. It depends on Mg(2+) as a cofactor.

The protein localises to the cytoplasm. The catalysed reaction is IMP + L-aspartate + GTP = N(6)-(1,2-dicarboxyethyl)-AMP + GDP + phosphate + 2 H(+). The protein operates within purine metabolism; AMP biosynthesis via de novo pathway; AMP from IMP: step 1/2. In terms of biological role, plays an important role in the de novo pathway and in the salvage pathway of purine nucleotide biosynthesis. Catalyzes the first committed step in the biosynthesis of AMP from IMP. This is Adenylosuccinate synthetase from Aspergillus clavatus (strain ATCC 1007 / CBS 513.65 / DSM 816 / NCTC 3887 / NRRL 1 / QM 1276 / 107).